Consider the following 152-residue polypeptide: TRAPP-associated protein TCA17 (152 aa).

This sequence belongs to the TRAPP small subunits family. Sedlin subfamily. Interacts with the TRAPP II complex; TRAPP II subunits TRS33 and TRS65 are required for this interaction.

The protein localises to the golgi apparatus. It localises to the trans-Golgi network. Required, together with the TRAPP II subunit TRS33, for TRAPP II complex assembly or stability, and for proper Golgi localization of TRAPP and the Rab GTPase YPT31. In Saccharomyces cerevisiae (strain ATCC 204508 / S288c) (Baker's yeast), this protein is TRAPP-associated protein TCA17 (TCA17).